The chain runs to 59 residues: Large ribosomal subunit protein uL30 (59 aa).

Belongs to the universal ribosomal protein uL30 family. In terms of assembly, part of the 50S ribosomal subunit.

The chain is Large ribosomal subunit protein uL30 from Nocardia farcinica (strain IFM 10152).